A 408-amino-acid polypeptide reads, in one-letter code: Arginine biosynthesis bifunctional protein ArgJ (408 aa).

Positions 158, 184, 195, 281, 403, and 408 each coordinate substrate. Threonine 195 (nucleophile) is an active-site residue.

The protein belongs to the ArgJ family. Heterotetramer of two alpha and two beta chains.

The protein resides in the cytoplasm. The enzyme catalyses N(2)-acetyl-L-ornithine + L-glutamate = N-acetyl-L-glutamate + L-ornithine. It carries out the reaction L-glutamate + acetyl-CoA = N-acetyl-L-glutamate + CoA + H(+). Its pathway is amino-acid biosynthesis; L-arginine biosynthesis; L-ornithine and N-acetyl-L-glutamate from L-glutamate and N(2)-acetyl-L-ornithine (cyclic): step 1/1. It functions in the pathway amino-acid biosynthesis; L-arginine biosynthesis; N(2)-acetyl-L-ornithine from L-glutamate: step 1/4. Functionally, catalyzes two activities which are involved in the cyclic version of arginine biosynthesis: the synthesis of N-acetylglutamate from glutamate and acetyl-CoA as the acetyl donor, and of ornithine by transacetylation between N(2)-acetylornithine and glutamate. The chain is Arginine biosynthesis bifunctional protein ArgJ from Bacillus thuringiensis subsp. konkukian (strain 97-27).